The following is a 616-amino-acid chain: Chaperone protein HscA homolog (616 aa).

The protein belongs to the heat shock protein 70 family.

Its function is as follows. Chaperone involved in the maturation of iron-sulfur cluster-containing proteins. Has a low intrinsic ATPase activity which is markedly stimulated by HscB. The chain is Chaperone protein HscA homolog from Aliivibrio fischeri (strain MJ11) (Vibrio fischeri).